We begin with the raw amino-acid sequence, 65 residues long: Pancreatic polypeptide prohormone (65 aa).

Tyrosine amide is present on Y36. A propeptide spanning residues 59 to 65 (ELSPMGA) is cleaved from the precursor.

This sequence belongs to the NPY family.

It is found in the secreted. Hormone secreted by pancreatic cells that acts as a regulator of pancreatic and gastrointestinal functions probably by signaling through the G protein-coupled receptor NPY4R2. The chain is Pancreatic polypeptide prohormone (PPY) from Sus scrofa (Pig).